We begin with the raw amino-acid sequence, 372 residues long: Putative KilA-N domain-containing protein L32 (372 aa).

A compositionally biased stretch (basic residues) spans 1-12; that stretch reads MPHKAPKSKLFR. The disordered stretch occupies residues 1–129; sequence MPHKAPKSKL…SDNDKSKDNF (129 aa). The span at 14 to 36 shows a compositional bias: basic and acidic residues; sequence RYVEDSDDETRGRSRNRSVEKSR. Basic residues predominate over residues 37–53; sequence SKSLTRSKSKSPKKSRS. Residues 79–120 show a composition bias toward acidic residues; it reads EDSEDSEDSESDQDDDKSDNEQSDSELDDSESDDDETDDNES. Residues 151-255 form the KilA-N domain; it reads KFAIGKFGDF…IKIGEWIEEW (105 aa).

This is Putative KilA-N domain-containing protein L32 from Acanthamoeba polyphaga (Amoeba).